Here is a 655-residue protein sequence, read N- to C-terminus: p-hydroxybenzoic acid efflux pump subunit AaeB (655 aa).

11 helical membrane-spanning segments follow: residues phenylalanine 13–leucine 33, tryptophan 38–proline 58, leucine 69–isoleucine 89, leucine 93–valine 113, tryptophan 121–leucine 141, glutamate 152–isoleucine 172, leucine 370–valine 390, phenylalanine 407–proline 427, glutamine 431–valine 451, methionine 459–phenylalanine 479, and phenylalanine 482–leucine 502.

Belongs to the aromatic acid exporter ArAE (TC 2.A.85) family.

It is found in the cell inner membrane. Its function is as follows. Forms an efflux pump with AaeA. Could function as a metabolic relief valve, allowing to eliminate certain compounds when they accumulate to high levels in the cell. This is p-hydroxybenzoic acid efflux pump subunit AaeB from Salmonella agona (strain SL483).